Consider the following 114-residue polypeptide: MAGLALQPGTALLCYSCKAQVSNEDCLQVENCTQLGEQCWTARIRAVGLLTVISKGCSLNCVDDSQDYYVGKKNITCCDTDLCNASGAHALQPAAAILALLPALGLLLWGPGQL.

The first 11 residues, 1 to 11 (MAGLALQPGTA), serve as a signal peptide directing secretion. Residues 12–86 (LLCYSCKAQV…CCDTDLCNAS (75 aa)) form the UPAR/Ly6 domain. Intrachain disulfides connect C14–C39, C17–C26, C32–C57, C61–C77, and C78–C83. N-linked (GlcNAc...) asparagine glycosylation is present at N31. The GPI-anchor amidated serine moiety is linked to residue S86. The propeptide at 86 to 114 (SGAHALQPAAAILALLPALGLLLWGPGQL) is removed in mature form.

Interacts with CHRNA4. Post-translationally, N-glycosylated. In terms of tissue distribution, highly expressed in prostate (basal, secretory and neuroendocrine epithelium cells). Also found in bladder (transitional epithelium), placenta (trophoblasts), stomach (neuroendocrine cells), colon (neuroendocrine cells) and kidney (collecting ducts). Overexpressed in prostate cancers and expression is correlated with tumor stage, grade and androgen-independence. Highly expressed in prostate cancer bone metastases. Expressed in gastric epithelial cells, mainly in the isthmus (at protein level). Not detected in normal intestinal epithelium (at protein level). Expressed in brain cortex; expression is significantly increased in the front cortex of Alzheimer disease patients.

It localises to the cell membrane. Functionally, may be involved in the regulation of cell proliferation. Has a cell-proliferation inhibition activity in vitro. In terms of biological role, may act as a modulator of nicotinic acetylcholine receptors (nAChRs) activity. In vitro inhibits nicotine-induced signaling probably implicating alpha-3:beta-2- or alpha-7-containing nAChRs. This Homo sapiens (Human) protein is Prostate stem cell antigen (PSCA).